A 329-amino-acid polypeptide reads, in one-letter code: Glycerol-3-phosphate dehydrogenase [NAD(P)+] (329 aa).

3 residues coordinate NADPH: tryptophan 11, arginine 30, and lysine 103. 3 residues coordinate sn-glycerol 3-phosphate: lysine 103, glycine 132, and serine 134. Alanine 136 is an NADPH binding site. Sn-glycerol 3-phosphate-binding residues include lysine 187, aspartate 240, serine 250, arginine 251, and asparagine 252. Lysine 187 (proton acceptor) is an active-site residue. Arginine 251 contributes to the NADPH binding site. NADPH is bound by residues valine 275 and glutamate 277.

It belongs to the NAD-dependent glycerol-3-phosphate dehydrogenase family.

It is found in the cytoplasm. The catalysed reaction is sn-glycerol 3-phosphate + NAD(+) = dihydroxyacetone phosphate + NADH + H(+). The enzyme catalyses sn-glycerol 3-phosphate + NADP(+) = dihydroxyacetone phosphate + NADPH + H(+). Its pathway is membrane lipid metabolism; glycerophospholipid metabolism. Functionally, catalyzes the reduction of the glycolytic intermediate dihydroxyacetone phosphate (DHAP) to sn-glycerol 3-phosphate (G3P), the key precursor for phospholipid synthesis. In Methylobacillus flagellatus (strain ATCC 51484 / DSM 6875 / VKM B-1610 / KT), this protein is Glycerol-3-phosphate dehydrogenase [NAD(P)+].